The chain runs to 150 residues: Large ribosomal subunit protein bL9 (150 aa).

Belongs to the bacterial ribosomal protein bL9 family.

Functionally, binds to the 23S rRNA. The sequence is that of Large ribosomal subunit protein bL9 from Buchnera aphidicola subsp. Schizaphis graminum (strain Sg).